A 1237-amino-acid polypeptide reads, in one-letter code: Putative structural protein VP3 (1237 aa).

Residues 963-1178 (GFLDKRVGDA…WDVSTAARMQ (216 aa)) form the PPPDE domain. Active-site residues include histidine 1001 and cysteine 1149.

The protein localises to the virion. This is Putative structural protein VP3 (S3) from Lymantria dispar cypovirus 1 (isolate Rao) (LdCPV-1).